The primary structure comprises 548 residues: Membrane protein insertase YidC (548 aa).

A run of 5 helical transmembrane segments spans residues 6–26 (NLILIGLLFVSFLLWQQWESD), 357–377 (NWGVAIIMLTLLVRGIMFPLT), 424–444 (LGGCLPILVQMPIFIALYWAL), 455–475 (FALWITDLSVKDPFFVLPILM), and 503–523 (PIIFTFMFLWFPAGLTLYWLV).

This sequence belongs to the OXA1/ALB3/YidC family. Type 1 subfamily. In terms of assembly, interacts with the Sec translocase complex via SecD. Specifically interacts with transmembrane segments of nascent integral membrane proteins during membrane integration.

Its subcellular location is the cell inner membrane. Required for the insertion and/or proper folding and/or complex formation of integral membrane proteins into the membrane. Involved in integration of membrane proteins that insert both dependently and independently of the Sec translocase complex, as well as at least some lipoproteins. Aids folding of multispanning membrane proteins. In Aeromonas hydrophila subsp. hydrophila (strain ATCC 7966 / DSM 30187 / BCRC 13018 / CCUG 14551 / JCM 1027 / KCTC 2358 / NCIMB 9240 / NCTC 8049), this protein is Membrane protein insertase YidC.